Reading from the N-terminus, the 86-residue chain is YcgL domain-containing protein XAC4085 (86 aa).

Positions 1–83 constitute a YcgL domain; that stretch reads MHAYVYKSQR…PKTIVLAGEC (83 aa).

The polypeptide is YcgL domain-containing protein XAC4085 (Xanthomonas axonopodis pv. citri (strain 306)).